The sequence spans 59 residues: UPF0391 membrane protein lpg2521 (59 aa).

Helical transmembrane passes span 5–25 and 30–50; these read ALIF…GIAV and IAKI…IMGL.

The protein belongs to the UPF0391 family.

It is found in the cell membrane. This is UPF0391 membrane protein lpg2521 from Legionella pneumophila subsp. pneumophila (strain Philadelphia 1 / ATCC 33152 / DSM 7513).